The sequence spans 31 residues: Photosystem II reaction center protein T (31 aa).

The chain crosses the membrane as a helical span at residues 3-23 (SLVYIFVFVVALGVLFFAIAF).

The protein belongs to the PsbT family. In terms of assembly, PSII is composed of 1 copy each of membrane proteins PsbA, PsbB, PsbC, PsbD, PsbE, PsbF, PsbH, PsbI, PsbJ, PsbK, PsbL, PsbM, PsbT, PsbX, PsbY, PsbZ, Psb30/Ycf12, peripheral proteins PsbO, CyanoQ (PsbQ), PsbU, PsbV and a large number of cofactors. It forms dimeric complexes.

The protein resides in the cellular thylakoid membrane. Functionally, found at the monomer-monomer interface of the photosystem II (PS II) dimer, plays a role in assembly and dimerization of PSII. PSII is a light-driven water plastoquinone oxidoreductase, using light energy to abstract electrons from H(2)O, generating a proton gradient subsequently used for ATP formation. The polypeptide is Photosystem II reaction center protein T (Synechococcus elongatus (strain ATCC 33912 / PCC 7942 / FACHB-805) (Anacystis nidulans R2)).